The following is a 515-amino-acid chain: Gap junction alpha-9 protein (515 aa).

Topologically, residues 1 to 19 (MGDWNLLGDTLEEVHIHST) are cytoplasmic. A helical transmembrane segment spans residues 20–40 (MIGKIWLTILFIFRMLVLGVA). At 41–77 (AEDVWNDEQSGFICNTEQPGCRNVCYDQAFPISLIRY) the chain is on the extracellular side. A helical membrane pass occupies residues 78–98 (WVLQVIFVSSPSLVYMGHALY). Residues 99–166 (RLRVLEEERQ…YVIHIFTRSV (68 aa)) are Cytoplasmic-facing. The helical transmembrane segment at 167–187 (VEVGFMIGQYLLYGFHLEPLF) threads the bilayer. Residues 188–209 (KCHGHPCPNIIDCFVSRPTEKT) are Extracellular-facing. A helical transmembrane segment spans residues 210–230 (IFLLFMQSIATISLFLNILEI). The Cytoplasmic segment spans residues 231–515 (FHLGFKKIKR…GRRVPTDLQI (285 aa)). The segment covering 370-380 (KRETEGKDSKR) has biased composition (basic and acidic residues). Disordered regions lie at residues 370–400 (KRET…GENN) and 428–472 (SSTE…NTAD). Positions 456–472 (PPSQGDSQSLDIPNTAD) are enriched in polar residues.

Belongs to the connexin family. Alpha-type (group II) subfamily. As to quaternary structure, a connexon is composed of a hexamer of connexins. Highly abundant in skeletal muscle. Also detected in testis.

Its subcellular location is the cell membrane. It localises to the cell junction. It is found in the gap junction. Its function is as follows. One gap junction consists of a cluster of closely packed pairs of transmembrane channels, the connexons, through which materials of low MW diffuse from one cell to a neighboring cell. The sequence is that of Gap junction alpha-9 protein (GJA9) from Homo sapiens (Human).